A 2242-amino-acid polypeptide reads, in one-letter code: Large tegument protein deneddylase (2242 aa).

A deubiquitination activity region spans residues 1–238; that stretch reads MKVTQASCHQ…IDLTGVVRES (238 aa). Residues 4 to 226 form the Peptidase C76 domain; the sequence is TQASCHQGDI…AARLVSTYRD (223 aa). Residues C24, D160, and H162 contribute to the active site. The tract at residues 239 to 318 is disordered; it reads ADTAATTTTA…KTLATASSSS (80 aa). Over residues 240-250 the composition is skewed to low complexity; the sequence is DTAATTTTAAP. Positions 251-268 are enriched in pro residues; that stretch reads SLPPLPDPIVDPGCPPGV. Residues 304 to 318 show a composition bias toward low complexity; sequence PSTTSKTLATASSSS. The interval 328–332 is interaction with inner tegument protein; that stretch reads SSAVP. A compositionally biased stretch (polar residues) spans 1173–1190; the sequence is SQQKMEGQLQETRQQMTE. A disordered region spans residues 1173–1229; that stretch reads SQQKMEGQLQETRQQMTETSERLDRSLRQDPGSSSVTRVPEKPFKGQELAGRITPPP. The segment covering 1191 to 1200 has biased composition (basic and acidic residues); sequence TSERLDRSLR.

Belongs to the herpesviridae large tegument protein family. In terms of assembly, interacts with host CUL1 and CUL4A; these interactions inhibit the E3 ligase activity of cullins. Interacts with inner tegument protein. Interacts with capsid vertex specific component CVC2. Interacts with the major capsid protein/MCP.

It is found in the virion tegument. The protein localises to the host cytoplasm. The protein resides in the host nucleus. It catalyses the reaction Thiol-dependent hydrolysis of ester, thioester, amide, peptide and isopeptide bonds formed by the C-terminal Gly of ubiquitin (a 76-residue protein attached to proteins as an intracellular targeting signal).. In terms of biological role, large tegument protein that plays multiple roles in the viral cycle. During viral entry, remains associated with the capsid while most of the tegument is detached and participates in the capsid transport toward the host nucleus. Plays a role in the routing of the capsid at the nuclear pore complex and subsequent uncoating. Within the host nucleus, acts as a deneddylase and promotes the degradation of nuclear CRLs (cullin-RING ubiquitin ligases) and thereby stabilizes nuclear CRL substrates, while cytoplasmic CRLs remain unaffected. These modifications prevent host cell cycle S-phase progression and create a favorable environment allowing efficient viral genome replication. Participates later in the secondary envelopment of capsids. Indeed, plays a linker role for the association of the outer viral tegument to the capsids together with the inner tegument protein. In Homo sapiens (Human), this protein is Large tegument protein deneddylase.